The chain runs to 270 residues: Replication protein A 32 kDa subunit (270 aa).

N-acetylmethionine is present on M1. 2 positions are modified to phosphoserine; by PRKDC: S4 and S8. A Phosphothreonine; by PRKDC modification is found at T21. A disordered region spans residues 21–41; the sequence is TQSPGGFGSPAPSQAEKKSRA. S23 bears the Phosphoserine; by CDK2 mark. S29 carries the phosphoserine; by CDK1 modification. The residue at position 33 (S33) is a Phosphoserine; by PRKDC. Residues K37 and K38 each participate in a glycyl lysine isopeptide (Lys-Gly) (interchain with G-Cter in ubiquitin) cross-link. The OB DNA-binding region spans 74–148; the sequence is VTIVGIIRHA…KSLVAFKIMP (75 aa). An interaction with RAD52, TIPIN, UNG and XPA region spans residues 187 to 270; sequence GMSEAGNFGG…DDHFKSTDAE (84 aa).

This sequence belongs to the replication factor A protein 2 family. In terms of assembly, component of the replication protein A complex (RPA/RP-A), a heterotrimeric complex composed of RPA1, RPA2 and RPA3. Interacts with PRPF19; the PRP19-CDC5L complex is recruited to the sites of DNA repair where it ubiquitinates the replication protein A complex (RPA). Interacts with SERTAD3. Interacts with TIPIN. Interacts with TIMELESS. Interacts with PPP4R2; the interaction is direct, DNA damage-dependent and mediates the recruitment of the PP4 catalytic subunit PPP4C. Interacts (hyperphosphorylated) with RAD51. Interacts with SMARCAL1; the interaction is direct and mediates the recruitment to the RPA complex of SMARCAL1. Interacts with RAD52 and XPA; those interactions are direct and associate RAD52 and XPA to the RPA complex. Interacts with FBH1. Interacts with ETAA1; the interaction is direct and promotes ETAA1 recruitment at stalled replication forks. Interacts with RFWD3. Interacts with DDI2. Interacts (in unphosphorylated form via N-terminus) with EIF4EBP3; the interaction enhances EIF4EBP3-mediated inhibition of EIF4E-mediated mRNA nuclear export. Interacts with BRIP1/FANCJ via the RPA1 subunit; following DNA damage they colocalize in foci in the nucleus. Interacts with nuclear UNG (isoform 2); this interaction mediates UNG recruitment to RPA-coated single-stranded DNA at stalled replication forks. Post-translationally, differentially phosphorylated throughout the cell cycle, becoming phosphorylated at the G1-S transition and dephosphorylated in late mitosis. Mainly phosphorylated at Ser-23 and Ser-29, by cyclin A-CDK2 and cyclin B-CDK1, respectively during DNA replication and mitosis. Dephosphorylation may require the serine/threonine-protein phosphatase 4. Phosphorylation at Ser-23 and Ser-29 is a prerequisite for further phosphorylation. Becomes hyperphosphorylated on additional residues including Ser-4, Ser-8, Thr-21 and Ser-33 in response to DNA damage. Hyperphosphorylation is mediated by ATM, ATR and PRKDC. Primarily recruited to DNA repair nuclear foci as a hypophosphorylated form it undergoes subsequent hyperphosphorylation, catalyzed by ATR. Hyperphosphorylation is required for RAD51 recruitment to chromatin and efficient DNA repair. Phosphorylation at Thr-21 depends upon RFWD3 presence. In terms of processing, DNA damage-induced 'Lys-63'-linked polyubiquitination by PRPF19 mediates ATRIP recruitment to the RPA complex at sites of DNA damage and activation of ATR. Ubiquitinated by RFWD3 at stalled replication forks in response to DNA damage: ubiquitination by RFWD3 does not lead to degradation by the proteasome and promotes removal of the RPA complex from stalled replication forks, promoting homologous recombination.

It is found in the nucleus. Its subcellular location is the PML body. In terms of biological role, as part of the heterotrimeric replication protein A complex (RPA/RP-A), binds and stabilizes single-stranded DNA intermediates that form during DNA replication or upon DNA stress. It prevents their reannealing and in parallel, recruits and activates different proteins and complexes involved in DNA metabolism. Thereby, it plays an essential role both in DNA replication and the cellular response to DNA damage. In the cellular response to DNA damage, the RPA complex controls DNA repair and DNA damage checkpoint activation. Through recruitment of ATRIP activates the ATR kinase a master regulator of the DNA damage response. It is required for the recruitment of the DNA double-strand break repair factors RAD51 and RAD52 to chromatin in response to DNA damage. Also recruits to sites of DNA damage proteins like XPA and XPG that are involved in nucleotide excision repair and is required for this mechanism of DNA repair. Also plays a role in base excision repair (BER) probably through interaction with UNG. Also recruits SMARCAL1/HARP, which is involved in replication fork restart, to sites of DNA damage. May also play a role in telomere maintenance. RPA stimulates 5'-3' helicase activity of BRIP1/FANCJ. This Homo sapiens (Human) protein is Replication protein A 32 kDa subunit (RPA2).